The sequence spans 1117 residues: DNA polymerase (1117 aa).

Residues 591–621 (ESSPVASFEEDSEQTSDSSLGEVSSQGSSDG) form a disordered region. A compositionally biased stretch (low complexity) spans 606–618 (SDSSLGEVSSQGS).

It belongs to the DNA polymerase type-B family.

The protein localises to the host nucleus. The catalysed reaction is DNA(n) + a 2'-deoxyribonucleoside 5'-triphosphate = DNA(n+1) + diphosphate. The protein is DNA polymerase of Cavia porcellus (Guinea pig).